The chain runs to 112 residues: Small ribosomal subunit protein bS6 (112 aa).

The protein belongs to the bacterial ribosomal protein bS6 family.

Functionally, binds together with bS18 to 16S ribosomal RNA. In Christiangramia forsetii (strain DSM 17595 / CGMCC 1.15422 / KT0803) (Gramella forsetii), this protein is Small ribosomal subunit protein bS6.